The following is a 160-amino-acid chain: MASEPGGLVEIWTDGGCKPNPGAGGWAAVLRFGAAEREMSGAERETTNNRMELTAAAAALEALKRPCRVKLHTDSEYLRNGITRWHTGWVRRNWRNAQGDPVANYELWQRVLAAAKPHEIEWIWVRGHAGDPMNERVDQLATAAREAMLREPAETSTARR.

Positions 5 to 146 (PGGLVEIWTD…VDQLATAARE (142 aa)) constitute an RNase H type-1 domain. Residues Asp14, Glu52, Asp74, and Asp138 each coordinate Mg(2+).

The protein belongs to the RNase H family. Monomer. It depends on Mg(2+) as a cofactor.

It is found in the cytoplasm. The enzyme catalyses Endonucleolytic cleavage to 5'-phosphomonoester.. Functionally, endonuclease that specifically degrades the RNA of RNA-DNA hybrids. The chain is Ribonuclease H from Acidiphilium cryptum (strain JF-5).